A 48-amino-acid polypeptide reads, in one-letter code: Protein TUNAR (48 aa).

The segment at Met-1–Glu-20 is disordered. Residues Asp-8–Glu-20 are compositionally biased toward basic and acidic residues. A helical membrane pass occupies residues Leu-24–Ile-44.

Interacts with ATPase ATP2A2/SERCA2. Interacts with ATPase ATP2A3/SERCA3; the interaction occurs at low levels in low glucose conditions and is increased by high glucose levels. In terms of tissue distribution, in the adult, expressed in Purkinje cells in the cerebellum, in motor neurons and interneurons in the spinal cord and in neurons of the cortex, hippocampus and thalamus (at protein level). Also detected in the developing cortex, hippocampus and thalamus at embryonic day E15.5 (at protein level).

It is found in the endoplasmic reticulum membrane. The protein localises to the extracellular vesicle membrane. Its function is as follows. In neurons, plays a role in the regulation of intracellular Ca(2+), possibly by acting as an activator of ATP2A2/SERCA2, thus increasing the efficiency with which Ca(2+) is removed from the cytoplasm. Inhibits differentiation of embryonic stem cells into neurons and inhibits neurite outgrowth, likely as a result of its role in intracellular Ca(2+) regulation. In pancreatic beta cells, lowers Ca(2+) levels in the endoplasmic reticulum and enhances glucose-stimulated insulin secretion. The polypeptide is Protein TUNAR (Mus musculus (Mouse)).